We begin with the raw amino-acid sequence, 557 residues long: uncharacterized protein (557 aa).

In terms of domain architecture, Helicase ATP-binding spans 70–224 (KVVEKMNGKA…FNLVSLLKPG (155 aa)). Position 82 to 90 (82 to 90 (ADEVGLGKT)) interacts with ATP. Positions 175–178 (DEAH) match the DEAH box motif. Positions 363-524 (QVVDLIKKID…NFEEHLHDIL (162 aa)) constitute a Helicase C-terminal domain.

Belongs to the SNF2/RAD54 helicase family.

This is an uncharacterized protein from Bacillus subtilis (strain 168).